The primary structure comprises 236 residues: Uridylate kinase (236 aa).

Position 12 to 15 (12 to 15 (KISG)) interacts with ATP. The tract at residues 20–25 (GTNGYG) is involved in allosteric activation by GTP. Residue Gly54 coordinates UMP. ATP contacts are provided by Gly55 and Arg59. UMP-binding positions include Asp72 and 133–140 (TGNPYFST). Residues Tyr166 and Asp169 each contribute to the ATP site.

Belongs to the UMP kinase family. As to quaternary structure, homohexamer.

The protein localises to the cytoplasm. It carries out the reaction UMP + ATP = UDP + ADP. Its pathway is pyrimidine metabolism; CTP biosynthesis via de novo pathway; UDP from UMP (UMPK route): step 1/1. Its activity is regulated as follows. Allosterically activated by GTP. Inhibited by UTP. Functionally, catalyzes the reversible phosphorylation of UMP to UDP. This chain is Uridylate kinase, found in Clostridium acetobutylicum (strain ATCC 824 / DSM 792 / JCM 1419 / IAM 19013 / LMG 5710 / NBRC 13948 / NRRL B-527 / VKM B-1787 / 2291 / W).